The primary structure comprises 705 residues: MATANFGKIQIGIYVEIKRSDGRIHQAMVTSLNEDNESVTVEWIENGDTKGKEIDLESIFSLNPDLVPDEDIEPSPELPPPSSSSKVNKIVKNRRTVAAVKNDPPPRDNRVVGSARARPSQLPEQSSSAQQNGSVSDISPVQAAKKEFGPPSRRKSNCVKEVEKLQEKREKRRLQQQELREKRAQDVDATNPNYEIMCMIRDFRGSLDYRPLTTADPIDEHRICVCVRKRPLNKKETQMKDLDVITIPSKDVVMVHEPKQKVDLTRYLENQTFRFDYAFDDSAPNEMVYRFTARPLVETIFERGMATCFAYGQTGSGKTHTMGGDFSGKNQDCSKGIYALAARDVFLMLKKPNYKKLELQVYATFFEIYSGKVFDLLNRKTKLRVLEDGKQQVQVVGLQEREVKCVEDVLKLIDIGNSCRTSGQTSANAHSSRSHAVFQIILRRKGKLHGKFSLIDLAGNERGADTSSADRQTRLEGAEINKSLLALKECIRALGRNKPHTPFRASKLTQVLRDSFIGENSRTCMIATISPGMASCENTLNTLRYANRVKELTVNPAAAGDVHPIMHHPPSQIDDLETQWGVGSSPQRDDLKLLCEQNEEEVSPQLFTFHEAVSQMVEMEEQVVEDHRAVFQESIRWIEDEKALLEMTEEVDYDVDSYATQLEAILEQKIDILTELRDKVKSFRAALQEEEQASKQINPKRPRAL.

The segment at 1–216 is globular; it reads MATANFGKIQ…LDYRPLTTAD (216 aa). A disordered region spans residues 65–186; the sequence is DLVPDEDIEP…QELREKRAQD (122 aa). Ser75 carries the post-translational modification Phosphoserine. Phosphothreonine is present on Thr96. Lys101 is subject to N6-acetyllysine. Polar residues predominate over residues 122 to 139; sequence LPEQSSSAQQNGSVSDIS. Phosphoserine occurs at positions 134 and 139. The span at 158–186 shows a compositional bias: basic and acidic residues; sequence CVKEVEKLQEKREKRRLQQQELREKRAQD. In terms of domain architecture, Kinesin motor spans 222–552; it reads RICVCVRKRP…LRYANRVKEL (331 aa). Residue 312-319 participates in ATP binding; sequence GQTGSGKT. A phosphoserine mark is found at Thr528 and Tyr545. Residues 659-698 are a coiled coil; the sequence is ATQLEAILEQKIDILTELRDKVKSFRAALQEEEQASKQIN.

The protein belongs to the TRAFAC class myosin-kinesin ATPase superfamily. Kinesin family. MCAK/KIF2 subfamily. Interacts with AURKA and PLK1. Interacts with PSRC1. Interacts with MCRS1; the interaction enhances recruitment of KIF2A to the minus ends of spindle microtubules which promotes chromosome alignment. As to expression, highest level in lung. High level in ovary, moderate levels in heart, kidney, placenta, skeletal muscle and spleen (at protein level). Pancreas and spleen express a shorter isoform (at protein level). Expressed in the flagellum of elongated spermatids and sperm in the testis lumen (at protein level). Isoform 1 expressed in neuronal cells. Isoform 2 expressed in astrocytes and fibroblasts.

It localises to the cytoplasm. The protein localises to the cytoskeleton. Its subcellular location is the microtubule organizing center. It is found in the centrosome. The protein resides in the spindle pole. It localises to the spindle. The protein localises to the lysosome. Plus end-directed microtubule-dependent motor required for normal brain development. May regulate microtubule dynamics during axonal growth. Required for normal progression through mitosis. Required for normal congress of chromosomes at the metaphase plate. Required for normal spindle dynamics during mitosis. Promotes spindle turnover. Implicated in formation of bipolar mitotic spindles. Has microtubule depolymerization activity. This chain is Kinesin-like protein KIF2A (Kif2a), found in Mus musculus (Mouse).